We begin with the raw amino-acid sequence, 368 residues long: Polymerase delta-interacting protein 2 (368 aa).

The N-terminal 21 residues, 1-21 (MAGCVARRALAVGSRWWSRSL), are a transit peptide targeting the mitochondrion. The ApaG domain occupies 235–360 (RETTENIRVT…FSLESNKDEK (126 aa)). Residue Thr292 is modified to Phosphothreonine.

Interacts with PCNA and POLD2. Interacts with SSBP1. Interacts with PRIMPOL; leading to enhance DNA polymerase activity of PRIMPOL. Interacts with POLH. Interacts with POLD1; leading to stimulate DNA polymerase activity of POLD1.

It localises to the mitochondrion matrix. Its subcellular location is the nucleus. Its function is as follows. Involved in DNA damage tolerance by regulating translesion synthesis (TLS) of templates carrying DNA damage lesions such as 8oxoG and abasic sites. May act by stimulating activity of DNA polymerases involved in TLS, such as PRIMPOL and polymerase delta (POLD1). The sequence is that of Polymerase delta-interacting protein 2 from Mus musculus (Mouse).